Here is a 189-residue protein sequence, read N- to C-terminus: UPF0301 protein Cgl3084/cg3414 (189 aa).

Belongs to the UPF0301 (AlgH) family.

The protein is UPF0301 protein Cgl3084/cg3414 of Corynebacterium glutamicum (strain ATCC 13032 / DSM 20300 / JCM 1318 / BCRC 11384 / CCUG 27702 / LMG 3730 / NBRC 12168 / NCIMB 10025 / NRRL B-2784 / 534).